Reading from the N-terminus, the 394-residue chain is p-hydroxybenzoate hydroxylase (394 aa).

FAD contacts are provided by residues S13, E32, 42–47 (RIRAGV), and Q102. Substrate is bound by residues Y201, 212-214 (SQR), and Y222. Residue D286 coordinates FAD. P293 contributes to the substrate binding site. An FAD-binding site is contributed by 299 to 300 (LN).

It belongs to the aromatic-ring hydroxylase family. Homodimer. The cofactor is FAD.

The enzyme catalyses 4-hydroxybenzoate + NADPH + O2 + H(+) = 3,4-dihydroxybenzoate + NADP(+) + H2O. It participates in aromatic compound metabolism; benzoate degradation via hydroxylation; 3,4-dihydroxybenzoate from benzoate: step 2/2. In terms of biological role, catalyzes the incorporation of an atom of dioxygen into p-hydroxybenzoate (p-OHB) to form 3,4-dihydroxybenzoate (3,4DOHB). The reaction occurs in two parts: reduction of the flavin adenine dinucleotide (FAD) in the enzyme by reduced nicotinamide adenine dinucleotide phosphate (NADPH) in response to binding p-hydroxybenzoate to the enzyme and oxidation of reduced FAD with oxygen to form a hydroperoxide, which then oxygenates p-hydroxybenzoate. This Pseudomonas aeruginosa (strain ATCC 15692 / DSM 22644 / CIP 104116 / JCM 14847 / LMG 12228 / 1C / PRS 101 / PAO1) protein is p-hydroxybenzoate hydroxylase.